Consider the following 426-residue polypeptide: Enolase (426 aa).

Q163 lines the (2R)-2-phosphoglycerate pocket. E205 functions as the Proton donor in the catalytic mechanism. Mg(2+)-binding residues include D242, E283, and D310. (2R)-2-phosphoglycerate contacts are provided by K335, R364, S365, and K386. K335 functions as the Proton acceptor in the catalytic mechanism.

This sequence belongs to the enolase family. Mg(2+) serves as cofactor.

It localises to the cytoplasm. It is found in the secreted. The protein resides in the cell surface. It carries out the reaction (2R)-2-phosphoglycerate = phosphoenolpyruvate + H2O. The protein operates within carbohydrate degradation; glycolysis; pyruvate from D-glyceraldehyde 3-phosphate: step 4/5. Its function is as follows. Catalyzes the reversible conversion of 2-phosphoglycerate (2-PG) into phosphoenolpyruvate (PEP). It is essential for the degradation of carbohydrates via glycolysis. In Paenarthrobacter aurescens (strain TC1), this protein is Enolase.